Here is a 171-residue protein sequence, read N- to C-terminus: Glycine cleavage system H protein 4 (171 aa).

Residues 30–112 (FAEVGITDYA…YEAGWIAVIE (83 aa)) enclose the Lipoyl-binding domain. An N6-lipoyllysine modification is found at lysine 71. Positions 139–171 (EKEEEVEVKEEELIETESIEELSEEELGYEENK) are disordered.

This sequence belongs to the GcvH family. The glycine cleavage system is composed of four proteins: P, T, L and H. (R)-lipoate is required as a cofactor.

Functionally, the glycine cleavage system catalyzes the degradation of glycine. The H protein shuttles the methylamine group of glycine from the P protein to the T protein. This Aquifex aeolicus (strain VF5) protein is Glycine cleavage system H protein 4.